Reading from the N-terminus, the 219-residue chain is Ribosomal RNA large subunit methyltransferase E (219 aa).

Residues Gly60, Trp62, Asp80, Asp96, and Asp120 each contribute to the S-adenosyl-L-methionine site. Lys160 functions as the Proton acceptor in the catalytic mechanism.

Belongs to the class I-like SAM-binding methyltransferase superfamily. RNA methyltransferase RlmE family.

The protein localises to the cytoplasm. It carries out the reaction uridine(2552) in 23S rRNA + S-adenosyl-L-methionine = 2'-O-methyluridine(2552) in 23S rRNA + S-adenosyl-L-homocysteine + H(+). Its function is as follows. Specifically methylates the uridine in position 2552 of 23S rRNA at the 2'-O position of the ribose in the fully assembled 50S ribosomal subunit. This is Ribosomal RNA large subunit methyltransferase E from Acidithiobacillus ferrooxidans (strain ATCC 23270 / DSM 14882 / CIP 104768 / NCIMB 8455) (Ferrobacillus ferrooxidans (strain ATCC 23270)).